The following is a 38-amino-acid chain: Cytochrome b6-f complex subunit 5 (38 aa).

The helical transmembrane segment at 5 to 25 (LVLGIVLGLIPITLAGLFVAA) threads the bilayer.

Belongs to the PetG family. In terms of assembly, the 4 large subunits of the cytochrome b6-f complex are cytochrome b6, subunit IV (17 kDa polypeptide, PetD), cytochrome f and the Rieske protein, while the 4 small subunits are PetG, PetL, PetM and PetN. The complex functions as a dimer.

It localises to the cellular thylakoid membrane. Its function is as follows. Component of the cytochrome b6-f complex, which mediates electron transfer between photosystem II (PSII) and photosystem I (PSI), cyclic electron flow around PSI, and state transitions. PetG is required for either the stability or assembly of the cytochrome b6-f complex. The chain is Cytochrome b6-f complex subunit 5 from Microcystis aeruginosa (strain NIES-843 / IAM M-2473).